Reading from the N-terminus, the 220-residue chain is MAQKPKRTKSGSAWMHEHVTDAYVKKAQQDGFRSRAAYKLLEIDSRDHLLHPGMTVVDLGAAPGSWCQVAVQKMKRQGRVLAIDLLPVAPLPGVEALQGDFTAPDTLAWLENTLQAARVDLVLSDMAPNMSGVMLRDQARHYELCELALDFAVNWLKPDGAFLVKVFQGSGFEDFRNAMRRAFDQVVIRKPDASRDRSSEVYLLGRRPVKLESVAATGAS.

Positions 64, 66, 84, 100, and 125 each coordinate S-adenosyl-L-methionine. K165 acts as the Proton acceptor in catalysis.

It belongs to the class I-like SAM-binding methyltransferase superfamily. RNA methyltransferase RlmE family.

It localises to the cytoplasm. It carries out the reaction uridine(2552) in 23S rRNA + S-adenosyl-L-methionine = 2'-O-methyluridine(2552) in 23S rRNA + S-adenosyl-L-homocysteine + H(+). In terms of biological role, specifically methylates the uridine in position 2552 of 23S rRNA at the 2'-O position of the ribose in the fully assembled 50S ribosomal subunit. This Thiobacillus denitrificans (strain ATCC 25259 / T1) protein is Ribosomal RNA large subunit methyltransferase E.